The sequence spans 120 residues: NAD(P)H-quinone oxidoreductase subunit 3, chloroplastic (120 aa).

The next 3 helical transmembrane spans lie at isoleucine 9–glycine 29, methionine 64–methionine 84, and valine 88–leucine 108.

Belongs to the complex I subunit 3 family. In terms of assembly, NDH is composed of at least 16 different subunits, 5 of which are encoded in the nucleus.

Its subcellular location is the plastid. It is found in the chloroplast thylakoid membrane. The catalysed reaction is a plastoquinone + NADH + (n+1) H(+)(in) = a plastoquinol + NAD(+) + n H(+)(out). The enzyme catalyses a plastoquinone + NADPH + (n+1) H(+)(in) = a plastoquinol + NADP(+) + n H(+)(out). In terms of biological role, NDH shuttles electrons from NAD(P)H:plastoquinone, via FMN and iron-sulfur (Fe-S) centers, to quinones in the photosynthetic chain and possibly in a chloroplast respiratory chain. The immediate electron acceptor for the enzyme in this species is believed to be plastoquinone. Couples the redox reaction to proton translocation, and thus conserves the redox energy in a proton gradient. The sequence is that of NAD(P)H-quinone oxidoreductase subunit 3, chloroplastic from Eucalyptus globulus subsp. globulus (Tasmanian blue gum).